The following is a 126-amino-acid chain: Large ribosomal subunit protein eL28 (126 aa).

S2 carries the N-acetylserine modification.

It belongs to the eukaryotic ribosomal protein eL28 family.

The protein is Large ribosomal subunit protein eL28 (rpl-28) of Caenorhabditis elegans.